The primary structure comprises 429 residues: Enolase (429 aa).

Gln-162 contributes to the (2R)-2-phosphoglycerate binding site. Residue Glu-204 is the Proton donor of the active site. Mg(2+)-binding residues include Asp-241, Glu-283, and Asp-310. The (2R)-2-phosphoglycerate site is built by Lys-335, Arg-364, Ser-365, and Lys-386. Lys-335 (proton acceptor) is an active-site residue.

Belongs to the enolase family. It depends on Mg(2+) as a cofactor.

The protein localises to the cytoplasm. The protein resides in the secreted. It localises to the cell surface. The catalysed reaction is (2R)-2-phosphoglycerate = phosphoenolpyruvate + H2O. It participates in carbohydrate degradation; glycolysis; pyruvate from D-glyceraldehyde 3-phosphate: step 4/5. In terms of biological role, catalyzes the reversible conversion of 2-phosphoglycerate (2-PG) into phosphoenolpyruvate (PEP). It is essential for the degradation of carbohydrates via glycolysis. This chain is Enolase, found in Mycobacterium tuberculosis (strain ATCC 25177 / H37Ra).